Consider the following 625-residue polypeptide: MNPNDNNLFGDIEQDNNPSFYGNQSFLRDPYGKSKQTCPPSVTSNGDPSITNDDNNSAHNNDLVSNSIVLSKKIEQMVNDPNLQINVISSERMINSSVVAYSIELSSFDDNRMIVKRRYSEFKSLRDNLQILFPTLVIPPIPEKHTLFTYLINSIDNSKELNIIETRKRCFANFLKDIIFDSNVALKSCVLVHKFLDPNYELCWNNAVNEPPVSLIPNNLLLANPVNPTDQNGLYSLLPIVNGFELNSNIDNISSLHKLNEDLHKLNEQVHVFELRKEQNERRHPSEPTTSLFTEIPISLIDFEKNFHQNIKVLTELNKLNSRSVKNFKSIINTLIELGGNLNNFSLQIHELNTDSNALSSLIEKFGSTIDSNFLGYEAFLMNDIIPEWQEPISQLVQYYLTSLQLIKFYKFKIIQYKLVYKLKFNKYQELANISTNFESQSKLKDLRNLDIDSPSINEAIKKIELNQKRLKNRKISSKKSWYGLFGGNSKPTFNLREDLPASTIPSEGTGIRRERTPLVSDENMSYPVNPSANLENTNIDINSHYKHKINQIEKELTKLDQLIDLTNTDISTLTQELNLNFNDFLVRVEKKWLVIMLEFIKNGKQLFKDNLQNWNECKVFINDL.

The disordered stretch occupies residues 1 to 59 (MNPNDNNLFGDIEQDNNPSFYGNQSFLRDPYGKSKQTCPPSVTSNGDPSITNDDNNSAH). Polar residues-rich tracts occupy residues 15 to 26 (DNNPSFYGNQSF) and 34 to 59 (SKQTCPPSVTSNGDPSITNDDNNSAH). In terms of domain architecture, PX spans 79–202 (NDPNLQINVI…HKFLDPNYEL (124 aa)). Residues Arg-118, Ser-120, Lys-144, and Arg-167 each contribute to the a 1,2-diacyl-sn-glycero-3-phospho-(1D-myo-inositol-3-phosphate) site.

This sequence belongs to the sorting nexin family.

The protein resides in the endosome membrane. The protein localises to the preautophagosomal structure membrane. Required for cytoplasm to vacuole transport (Cvt), pexophagy and mitophagy. Also involved in endoplasmic reticulum-specific autophagic process and is essential for the survival of cells subjected to severe ER stress. Functions in protein retrieval from the endocytic pathway. The chain is Autophagy-related protein 20 (ATG20) from Debaryomyces hansenii (strain ATCC 36239 / CBS 767 / BCRC 21394 / JCM 1990 / NBRC 0083 / IGC 2968) (Yeast).